Consider the following 291-residue polypeptide: N-acetylmannosamine kinase (291 aa).

Residues 5-12 (AIDIGGTK) and 132-139 (GVGGGVVS) each bind ATP. H156, C166, C168, and C173 together coordinate Zn(2+).

This sequence belongs to the ROK (NagC/XylR) family. NanK subfamily. As to quaternary structure, homodimer.

The enzyme catalyses an N-acyl-D-mannosamine + ATP = an N-acyl-D-mannosamine 6-phosphate + ADP + H(+). The protein operates within amino-sugar metabolism; N-acetylneuraminate degradation; D-fructose 6-phosphate from N-acetylneuraminate: step 2/5. Catalyzes the phosphorylation of N-acetylmannosamine (ManNAc) to ManNAc-6-P. The polypeptide is N-acetylmannosamine kinase (Escherichia coli O127:H6 (strain E2348/69 / EPEC)).